We begin with the raw amino-acid sequence, 1304 residues long: Splicing factor 3B subunit 1 (1304 aa).

2 disordered regions span residues 100–119 (QYDP…EDEY) and 124–148 (RTMI…PKMN). A compositionally biased stretch (basic and acidic residues) spans 104 to 119 (FAEHRPPKIADREDEY). Phosphothreonine is present on threonine 125. Serine 129 bears the Phosphoserine mark. Lysine 141 carries the post-translational modification N6-acetyllysine. Threonine 142 is modified (phosphothreonine). Citrulline is present on arginine 157. The interval 173-360 (AEKAKAGELK…PVLTPGKTPI (188 aa)) is disordered. The tract at residues 190 to 342 (SQPPSKRKRR…KRKSRWDETP (153 aa)) is U2AF homology region; mediates interaction with RBM39. Serine 194 bears the Phosphoserine mark. Phosphothreonine occurs at positions 203, 207, and 211. N6-acetyllysine; alternate is present on lysine 214. Lysine 214 is covalently cross-linked (Glycyl lysine isopeptide (Lys-Gly) (interchain with G-Cter in SUMO2); alternate). Phosphothreonine is present on residues threonine 223 and threonine 227. The tract at residues 223–491 (TPGHTPSLRW…VDESTLSPEE (269 aa)) is interaction with PPP1R8. Position 229 is a phosphoserine (serine 229). The span at 231-241 (RWDETPGRAKG) shows a compositional bias: basic and acidic residues. Phosphothreonine is present on residues threonine 235, threonine 244, threonine 248, threonine 257, threonine 261, threonine 267, threonine 273, and threonine 278. Serine 287 is subject to Phosphoserine. Residues 291 to 304 (NRWDETPKTERDTP) are compositionally biased toward basic and acidic residues. Threonine 296, threonine 299, threonine 303, and threonine 313 each carry phosphothreonine. Serine 322 carries the phosphoserine modification. 2 positions are modified to phosphothreonine: threonine 326 and threonine 328. Serine 332 bears the Phosphoserine mark. Phosphothreonine is present on threonine 341. Over residues 342 to 352 (PASQMGGSTPV) the composition is skewed to polar residues. A phosphoserine mark is found at serine 344 and serine 349. Phosphothreonine is present on residues threonine 350 and threonine 354. The residue at position 400 (serine 400) is a Phosphoserine. Lysine 413 participates in a covalent cross-link: Glycyl lysine isopeptide (Lys-Gly) (interchain with G-Cter in SUMO2); alternate. Residue lysine 413 forms a Glycyl lysine isopeptide (Lys-Gly) (interchain with G-Cter in SUMO1); alternate linkage. Threonine 426 carries the phosphothreonine modification. Residue lysine 430 forms a Glycyl lysine isopeptide (Lys-Gly) (interchain with G-Cter in SUMO2) linkage. A Phosphothreonine; by DYRK1A modification is found at threonine 434. The residue at position 436 (threonine 436) is a Phosphothreonine. Serine 488 is modified (phosphoserine). HEAT repeat units lie at residues 529–568 (GPLF…DLVR), 569–603 (PYVH…LAKA), 604–641 (AGLA…ALGI), 643–677 (SLLP…LMGC), 680–718 (LPHL…AATP), 763–801 (NYYT…TDGV), 843–881 (KVGA…NLGA), 1010–1048 (TPPI…RGAE), 1052–1090 (AREW…AIGP), 1122–1160 (TCSP…YIGE), and 1163–1201 (KDYI…GVYG). The interval 529 to 568 (GPLFNQILPLLMSPTLEDQERHLLVKVIDRILYKLDDLVR) is interaction with SF3B14. Positions 547-550 (QERH) are interaction with PHF5A. Residues lysine 554 and lysine 562 each carry the N6-acetyllysine modification. The interaction with PHF5A stretch occupies residues 1156-1157 (EY). The tract at residues 1248–1304 (QYCLQGLFHPARKVRDVYWKIYNSIYIGSQDALIAHYPRIYNDDKNTYIRYELDYIL) is interaction with SF3B3 and SF3B5.

This sequence belongs to the SF3B1 family. In terms of assembly, component of the 17S U2 SnRNP complex, a ribonucleoprotein complex that contains small nuclear RNA (snRNA) U2 and a number of specific proteins. Part of the SF3B subcomplex of the 17S U2 SnRNP complex. SF3B associates with the splicing subcomplex SF3A and a 12S RNA unit to form the U2 small nuclear ribonucleoproteins complex (U2 snRNP). Within the SF3B complex, interacts directly (via HEAT domain) with SF3B3, SF3B5, SF3B6 and (via HEAT domain) with PHF5A. The SF3B subcomplex interacts with U2AF2. Identified in the spliceosome C complex. Component of the minor (U12-type spliceosome) spliceosome. Within the minor spliceosome complex, interacts with SCNM1 and CRIPT. Component of the B-WICH complex, at least composed of SMARCA5/SNF2H, BAZ1B/WSTF, SF3B1, DEK, MYO1C, ERCC6, MYBBP1A and DDX21. Phosphorylated form interacts with PPP1R8. Interacts with PQBP1. Interacts with RBM17. Interacts with RBM39. Interacts with SETX. Interacts with RBM15. Interacts with USH1G. Interacts with SDE2. Interacts with U2AF1. Interacts with CACTIN. Interacts with ZRSR1. Interacts with CYREN. Phosphorylated. Phosphorylation occurs concomitantly with the splicing catalytic steps. Phosphorylation on Thr-244, Thr-248 and Thr-313 by cyclin-dependent kinases promotes interaction with PPP1R8 during mitosis. Post-translationally, citrullinated by PADI4.

Its subcellular location is the nucleus. It localises to the nucleus speckle. In terms of biological role, component of the 17S U2 SnRNP complex of the spliceosome, a large ribonucleoprotein complex that removes introns from transcribed pre-mRNAs. The 17S U2 SnRNP complex (1) directly participates in early spliceosome assembly and (2) mediates recognition of the intron branch site during pre-mRNA splicing by promoting the selection of the pre-mRNA branch-site adenosine, the nucleophile for the first step of splicing. Within the 17S U2 SnRNP complex, SF3B1 is part of the SF3B subcomplex, which is required for 'A' complex assembly formed by the stable binding of U2 snRNP to the branchpoint sequence in pre-mRNA. Sequence independent binding of SF3A and SF3B subcomplexes upstream of the branch site is essential, it may anchor U2 snRNP to the pre-mRNA. May also be involved in the assembly of the 'E' complex. Also acts as a component of the minor spliceosome, which is involved in the splicing of U12-type introns in pre-mRNAs. Together with other U2 snRNP complex components may also play a role in the selective processing of microRNAs (miRNAs) from the long primary miRNA transcript, pri-miR-17-92. The chain is Splicing factor 3B subunit 1 from Homo sapiens (Human).